A 258-amino-acid chain; its full sequence is Phosphate import ATP-binding protein PstB 2 (258 aa).

The ABC transporter domain maps to 12–253 (IQVRDLNFYY…PQQKQTEDYI (242 aa)). Residue 44-51 (GPSGCGKS) coordinates ATP.

Belongs to the ABC transporter superfamily. Phosphate importer (TC 3.A.1.7) family. The complex is composed of two ATP-binding proteins (PstB), two transmembrane proteins (PstC and PstA) and a solute-binding protein (PstS).

The protein resides in the cell inner membrane. The enzyme catalyses phosphate(out) + ATP + H2O = ADP + 2 phosphate(in) + H(+). Its function is as follows. Part of the ABC transporter complex PstSACB involved in phosphate import. Responsible for energy coupling to the transport system. In Yersinia pestis bv. Antiqua (strain Nepal516), this protein is Phosphate import ATP-binding protein PstB 2.